Here is a 263-residue protein sequence, read N- to C-terminus: P29 (263 aa).

The segment covering 30–39 (VPEGLRDISK) has biased composition (basic and acidic residues). The disordered stretch occupies residues 30–93 (VPEGLRDISK…PKQKQLAPPI (64 aa)). Residues 52-64 (LSRASARPQQLQP) are compositionally biased toward polar residues.

The sequence is that of P29 (p29) from Citrus sinensis (Sweet orange).